Reading from the N-terminus, the 226-residue chain is Beta-phosphoglucomutase (226 aa).

D7 (nucleophile) is an active-site residue. Mg(2+) contacts are provided by D7 and D9. At D7 the chain carries 4-aspartylphosphate. Catalysis depends on D9, which acts as the Proton donor/acceptor. D9, G44, I45, R47, S116, R117, and N118 together coordinate beta-D-glucose 6-phosphate. Residue D170 coordinates Mg(2+).

The protein belongs to the HAD-like hydrolase superfamily. CbbY/CbbZ/Gph/YieH family. In terms of assembly, homodimer. It depends on Mg(2+) as a cofactor. In terms of processing, autophosphorylated.

It localises to the cytoplasm. It carries out the reaction beta-D-glucose 1-phosphate = beta-D-glucose 6-phosphate. Its function is as follows. Catalyzes the interconversion of D-glucose 1-phosphate (G1P) and D-glucose 6-phosphate (G6P), forming beta-D-glucose 1,6-(bis)phosphate (beta-G16P) as an intermediate. The sequence is that of Beta-phosphoglucomutase (yvdM) from Bacillus subtilis (strain 168).